The following is a 191-amino-acid chain: UPF0149 protein VCM66_2399 (191 aa).

It belongs to the UPF0149 family.

This Vibrio cholerae serotype O1 (strain M66-2) protein is UPF0149 protein VCM66_2399.